The chain runs to 436 residues: Testican-3 (436 aa).

A signal peptide spans 1–22 (MLKVSAVLCVCAAAWCSQSLAA). 8 disulfides stabilise this stretch: Cys-90–Cys-101, Cys-95–Cys-111, Cys-139–Cys-169, Cys-142–Cys-162, Cys-151–Cys-183, Cys-317–Cys-341, Cys-352–Cys-359, and Cys-361–Cys-380. Residues 133-185 (GPILSTCKQCPVVYPSPVCGSDGHTYSFQCKLEYQACVLGKQISVKCEGHCPC) form the Kazal-like domain. The Thyroglobulin type-1 domain maps to 314-380 (DPPCQTELSN…GSRINGVADC (67 aa)). O-linked (Xyl...) (glycosaminoglycan) serine glycans are attached at residues Ser-387 and Ser-392. Positions 393 to 436 (GDFHEWTDDEDDEDDIMNDEDEIEDDDEDEGDDDDGGDDHDGYI) are disordered. The segment covering 399–430 (TDDEDDEDDIMNDEDEIEDDDEDEGDDDDGGD) has biased composition (acidic residues).

In terms of processing, contains chondroitin sulfate and heparan sulfate O-linked oligosaccharides. In terms of tissue distribution, expressed in brain.

Its subcellular location is the secreted. The protein resides in the extracellular space. It is found in the extracellular matrix. Functionally, may participate in diverse steps of neurogenesis. Inhibits the processing of pro-matrix metalloproteinase 2 (MMP-2) by MT1-MMP and MT3-MMP. May interfere with tumor invasion. This is Testican-3 (SPOCK3) from Pongo abelii (Sumatran orangutan).